We begin with the raw amino-acid sequence, 185 residues long: Potassium-transporting ATPase KdpC subunit (185 aa).

The chain crosses the membrane as a helical span at residues 14-34 (ALSLLTGVAYPLALTGIAAVI).

Belongs to the KdpC family. In terms of assembly, the system is composed of three essential subunits: KdpA, KdpB and KdpC.

Its subcellular location is the cell inner membrane. Functionally, part of the high-affinity ATP-driven potassium transport (or Kdp) system, which catalyzes the hydrolysis of ATP coupled with the electrogenic transport of potassium into the cytoplasm. This subunit acts as a catalytic chaperone that increases the ATP-binding affinity of the ATP-hydrolyzing subunit KdpB by the formation of a transient KdpB/KdpC/ATP ternary complex. In Cereibacter sphaeroides (strain ATCC 17023 / DSM 158 / JCM 6121 / CCUG 31486 / LMG 2827 / NBRC 12203 / NCIMB 8253 / ATH 2.4.1.) (Rhodobacter sphaeroides), this protein is Potassium-transporting ATPase KdpC subunit.